The primary structure comprises 248 residues: UPF0736 protein BT9727_1080 (248 aa).

Belongs to the UPF0736 family.

This chain is UPF0736 protein BT9727_1080, found in Bacillus thuringiensis subsp. konkukian (strain 97-27).